Consider the following 272-residue polypeptide: 3-methyl-2-oxobutanoate hydroxymethyltransferase (272 aa).

Mg(2+) is bound by residues Asp54 and Asp93. 3-methyl-2-oxobutanoate-binding positions include 54 to 55 (DS), Asp93, and Lys121. Glu123 serves as a coordination point for Mg(2+). The active-site Proton acceptor is Glu190.

The protein belongs to the PanB family. Homodecamer; pentamer of dimers. Mg(2+) is required as a cofactor.

The protein localises to the cytoplasm. The catalysed reaction is 3-methyl-2-oxobutanoate + (6R)-5,10-methylene-5,6,7,8-tetrahydrofolate + H2O = 2-dehydropantoate + (6S)-5,6,7,8-tetrahydrofolate. It functions in the pathway cofactor biosynthesis; (R)-pantothenate biosynthesis; (R)-pantoate from 3-methyl-2-oxobutanoate: step 1/2. Functionally, catalyzes the reversible reaction in which hydroxymethyl group from 5,10-methylenetetrahydrofolate is transferred onto alpha-ketoisovalerate to form ketopantoate. In Janthinobacterium sp. (strain Marseille) (Minibacterium massiliensis), this protein is 3-methyl-2-oxobutanoate hydroxymethyltransferase.